The following is a 236-amino-acid chain: Small ribosomal subunit protein uS2c (236 aa).

Belongs to the universal ribosomal protein uS2 family.

The protein resides in the plastid. It localises to the chloroplast. In Oenothera parviflora (Small-flowered evening primrose), this protein is Small ribosomal subunit protein uS2c (rps2).